Consider the following 149-residue polypeptide: Large ribosomal subunit protein uL13 (149 aa).

This sequence belongs to the universal ribosomal protein uL13 family. Part of the 50S ribosomal subunit.

This protein is one of the early assembly proteins of the 50S ribosomal subunit, although it is not seen to bind rRNA by itself. It is important during the early stages of 50S assembly. This is Large ribosomal subunit protein uL13 from Pelodictyon phaeoclathratiforme (strain DSM 5477 / BU-1).